A 405-amino-acid polypeptide reads, in one-letter code: Envelope glycoprotein M (405 aa).

Residues 1-17 (MKSSKNDTFVYRTWVKT) are Intravirion-facing. Residues 18-38 (LVVYFVMFVMSAVVPITAMFP) traverse the membrane as a helical segment. At 39–76 (NLGYPCYFNALVDYGALNLTNYNLAHHLTPTLYLEPPE) the chain is on the virion surface side. The helical transmembrane segment at 77–97 (MFVYITLVFIADCVAFIYYAC) threads the bilayer. The Intravirion portion of the chain corresponds to 98-121 (GEVALIKARKKVSGLTDLSAWVSA). Residues 122–142 (VGSPTVLFLAILKLWSIQVFI) traverse the membrane as a helical segment. Topologically, residues 143-149 (QVLSYKH) are virion surface. Residues 150–170 (VFLSAFVYFLHFLASVLHACA) form a helical membrane-spanning segment. At 171-192 (CVTRFSPVWVVKAQDNSIPQDT) the chain is on the intravirion side. Residues 193 to 215 (FLWWVVFYLKPVVTNLYLGCLAL) form a helical membrane-spanning segment. The Virion surface portion of the chain corresponds to 216–245 (ETLVFSLSVFLALGNSFYFMVGDMVLGAVN). A helical transmembrane segment spans residues 246-266 (LFLILPIFWYILTEVWLASFM). A topological domain (intravirion) is located at residue Arg267. Residues 268–288 (HNFGFYCGMFIASIILILPLV) traverse the membrane as a helical segment. The Virion surface portion of the chain corresponds to 289–299 (RYEAVFVSAKL). Residues 300–320 (HTTVAINVAIIPILCSVAMLI) traverse the membrane as a helical segment. The Intravirion portion of the chain corresponds to 321 to 405 (RICRIFKSMR…TTDSEEEIFP (85 aa)). A disordered region spans residues 346–405 (LESEPRPRPSRTPSPGRNRRRSSTSSSSSRSTRRQRPVSTQALVSSVLPMTTDSEEEIFP). The segment covering 386 to 397 (QALVSSVLPMTT) has biased composition (polar residues).

The protein belongs to the herpesviridae glycoprotein M family. Interacts (via N-terminus) with gN (via N-terminus). The gM-gN heterodimer forms the gCII complex.

The protein resides in the virion membrane. Its subcellular location is the host Golgi apparatus. It localises to the host trans-Golgi network. The protein localises to the host endosome membrane. It is found in the host nucleus inner membrane. Envelope glycoprotein important for virion assembly and egress. Plays a role in the correct incorporation of gH-gL into virion membrane. Directs the glycoprotein N (gN) to the host trans-Golgi network. The protein is Envelope glycoprotein M of Epstein-Barr virus (strain GD1) (HHV-4).